The chain runs to 281 residues: Putative phosphatase/phosphodiesterase MPN_349 (281 aa).

The Fe cation site is built by aspartate 12, glutamate 43, asparagine 44, and asparagine 71. The active-site Proton donor is the histidine 72. Fe cation-binding residues include histidine 158, histidine 183, and histidine 185.

It belongs to the YmdB-like family. Fe(3+) serves as cofactor.

In Mycoplasma pneumoniae (strain ATCC 29342 / M129 / Subtype 1) (Mycoplasmoides pneumoniae), this protein is Putative phosphatase/phosphodiesterase MPN_349.